We begin with the raw amino-acid sequence, 362 residues long: Mitochondrial glycine transporter (362 aa).

Solcar repeat units follow at residues 22-108 (PDAT…MRTS), 132-236 (LTAM…FKND), and 269-354 (RSSI…LIKS). 6 helical membrane-spanning segments follow: residues 28–53 (LLAG…TRLQ), 83–109 (GTLP…RTSW), 138–163 (LTTG…TRFE), 211–234 (GSVA…EAFK), 273–299 (INST…KTRL), and 329–347 (GLSL…SWCI).

Belongs to the mitochondrial carrier (TC 2.A.29) family. SLC25A38 subfamily.

The protein resides in the mitochondrion inner membrane. The catalysed reaction is glycine(in) = glycine(out). Mitochondrial glycine transporter that imports glycine into the mitochondrial matrix. Plays an important role in providing glycine for the first enzymatic step in heme biosynthesis, the condensation of glycine with succinyl-CoA to produce 5-aminolevulinate (ALA) in the mitochondrial matrix. The polypeptide is Mitochondrial glycine transporter (Candida albicans (strain SC5314 / ATCC MYA-2876) (Yeast)).